A 128-amino-acid polypeptide reads, in one-letter code: MAGSVPWAASRRLWGWVPSACRSFSLGVPRLAFVRLTLPPPKVVDRWNEKRALFGVYDNIGILGNFEKHPKELIKGPVWLRGWRGNELQRCVRKKKFVGNRMFIEDLHNLNKRISYLYKHFNRHGKYR.

The N-terminal 31 residues, 1 to 31, are a transit peptide targeting the mitochondrion; sequence MAGSVPWAASRRLWGWVPSACRSFSLGVPRL.

It belongs to the mitochondrion-specific ribosomal protein mL51 family. In terms of assembly, component of the mitochondrial ribosome large subunit (39S) which comprises a 16S rRNA and about 50 distinct proteins. Interacts with OXA1L.

The protein resides in the mitochondrion. The sequence is that of Large ribosomal subunit protein mL51 (Mrpl51) from Mus musculus (Mouse).